The chain runs to 451 residues: Tubulin alpha-1 chain (451 aa).

Gln-11 lines the GTP pocket. An N6-acetyllysine modification is found at Lys-40. GTP contacts are provided by Glu-71, Gly-144, Thr-145, Thr-179, Asn-206, and Asn-228. Position 71 (Glu-71) interacts with Mg(2+). Residue Glu-254 is part of the active site.

Belongs to the tubulin family. In terms of assembly, dimer of alpha and beta chains. A typical microtubule is a hollow water-filled tube with an outer diameter of 25 nm and an inner diameter of 15 nM. Alpha-beta heterodimers associate head-to-tail to form protofilaments running lengthwise along the microtubule wall with the beta-tubulin subunit facing the microtubule plus end conferring a structural polarity. Microtubules usually have 13 protofilaments but different protofilament numbers can be found in some organisms and specialized cells. Requires Mg(2+) as cofactor. Post-translationally, undergoes a tyrosination/detyrosination cycle, the cyclic removal and re-addition of a C-terminal tyrosine residue by the enzymes tubulin tyrosine carboxypeptidase (TTCP) and tubulin tyrosine ligase (TTL), respectively. Acetylation of alpha chains at Lys-40 stabilizes microtubules and affects affinity and processivity of microtubule motors. This modification has a role in multiple cellular functions, ranging from cell motility, cell cycle progression or cell differentiation to intracellular trafficking and signaling.

Its subcellular location is the cytoplasm. The protein localises to the cytoskeleton. The enzyme catalyses GTP + H2O = GDP + phosphate + H(+). Tubulin is the major constituent of microtubules, a cylinder consisting of laterally associated linear protofilaments composed of alpha- and beta-tubulin heterodimers. Microtubules grow by the addition of GTP-tubulin dimers to the microtubule end, where a stabilizing cap forms. Below the cap, tubulin dimers are in GDP-bound state, owing to GTPase activity of alpha-tubulin. The sequence is that of Tubulin alpha-1 chain (TUBA1) from Chlamydomonas reinhardtii (Chlamydomonas smithii).